We begin with the raw amino-acid sequence, 64 residues long: Prokaryotic ubiquitin-like protein Pup (64 aa).

Residues 1–37 are disordered; sequence MAQEQTKRGGGGGDDEDVTGTTAAGQERREKLAQDTD. The tract at residues 21 to 58 is ARC ATPase binding; that stretch reads TTAAGQERREKLAQDTDDLLDEIDDVLEENAEDFVRAY. Positions 25–52 form a coiled coil; sequence GQERREKLAQDTDDLLDEIDDVLEENAE. Q64 carries the post-translational modification Deamidated glutamine. Residue Q64 forms an Isoglutamyl lysine isopeptide (Gln-Lys) (interchain with K-? in acceptor proteins) linkage.

This sequence belongs to the prokaryotic ubiquitin-like protein family. Strongly interacts with the proteasome-associated ATPase ARC through a hydrophobic interface; the interacting region of Pup lies in its C-terminal half. There is one Pup binding site per ARC hexamer ring. Post-translationally, is modified by deamidation of its C-terminal glutamine to glutamate by the deamidase Dop, a prerequisite to the subsequent pupylation process.

Its pathway is protein degradation; proteasomal Pup-dependent pathway. Protein modifier that is covalently attached to lysine residues of substrate proteins, thereby targeting them for proteasomal degradation. The tagging system is termed pupylation. The sequence is that of Prokaryotic ubiquitin-like protein Pup from Mycobacterium marinum (strain ATCC BAA-535 / M).